The following is a 214-amino-acid chain: 3-isopropylmalate dehydratase small subunit (214 aa).

The protein belongs to the LeuD family. LeuD type 1 subfamily. In terms of assembly, heterodimer of LeuC and LeuD.

It carries out the reaction (2R,3S)-3-isopropylmalate = (2S)-2-isopropylmalate. Its pathway is amino-acid biosynthesis; L-leucine biosynthesis; L-leucine from 3-methyl-2-oxobutanoate: step 2/4. Its function is as follows. Catalyzes the isomerization between 2-isopropylmalate and 3-isopropylmalate, via the formation of 2-isopropylmaleate. The protein is 3-isopropylmalate dehydratase small subunit of Methylobacillus flagellatus (strain ATCC 51484 / DSM 6875 / VKM B-1610 / KT).